We begin with the raw amino-acid sequence, 878 residues long: Protein argonaute 6 (878 aa).

Residues 1-17 show a composition bias toward low complexity; sequence METSSSLPLSPISIEPE. Residues 1–25 are disordered; the sequence is METSSSLPLSPISIEPEQPSHRDYD. A PAZ domain is found at 259–372; sequence PVIEFLKANQ…LPLEFCNLVS (114 aa). The 311-residue stretch at 541-851 folds into the Piwi domain; that stretch reads FILCILPERK…AAAQVAQFTK (311 aa).

Belongs to the argonaute family. Ago subfamily. As to expression, expressed in roots, cotyledons and shoot meristematic region.

It localises to the nucleus. Its function is as follows. Involved in transcriptional gene silencing (TGS). Component of the RISC complex that associate with the small interfering RNA (siRNA) pathway involved in direct cytosine methylation at endogenous DNA repeats. Required for the accumulation of specific siRNAs derived from transgene and heterochromatin-related endogenous loci. Involved in RNA-directed DNA methylation (RdDM) at specific endogenous loci. Probably not required for the accumulation of siRNAs derived from transgene inverted repeats that induce post-transcriptional gene silencing (PTGS). Associates mainly with small RNAs of 24 nucleotide in length and preferentially recruits small RNAs with a 5' terminal adenosine. Targeted by turnip yellows virus (TuYV) protein P0 (via F-box-like domain) for probable proteasome degradation and thereby inactivating AGO6 function in RNA silencing. This Arabidopsis thaliana (Mouse-ear cress) protein is Protein argonaute 6 (AGO6).